The primary structure comprises 605 residues: Elongation factor 4 (605 aa).

The tr-type G domain maps to 11–193 (KRIRNFSIIA…QIVTRISPPQ (183 aa)). GTP contacts are provided by residues 23 to 28 (DHGKST) and 140 to 143 (NKVD).

Belongs to the TRAFAC class translation factor GTPase superfamily. Classic translation factor GTPase family. LepA subfamily.

The protein localises to the cell membrane. It catalyses the reaction GTP + H2O = GDP + phosphate + H(+). Its function is as follows. Required for accurate and efficient protein synthesis under certain stress conditions. May act as a fidelity factor of the translation reaction, by catalyzing a one-codon backward translocation of tRNAs on improperly translocated ribosomes. Back-translocation proceeds from a post-translocation (POST) complex to a pre-translocation (PRE) complex, thus giving elongation factor G a second chance to translocate the tRNAs correctly. Binds to ribosomes in a GTP-dependent manner. The protein is Elongation factor 4 of Onion yellows phytoplasma (strain OY-M).